Here is a 274-residue protein sequence, read N- to C-terminus: Undecaprenyl-diphosphatase (274 aa).

Transmembrane regions (helical) follow at residues 4–24 (LLVI…LLPI), 46–66 (VVFE…EYRV), 86–106 (INVA…SDFI), 109–129 (VLFS…IIMW), 145–165 (ISYA…IPGT), 188–208 (FSFF…LWEA), 214–234 (IEDM…TFAV), and 250–270 (FAWY…TGVI).

The protein belongs to the UppP family.

The protein resides in the cell inner membrane. The enzyme catalyses di-trans,octa-cis-undecaprenyl diphosphate + H2O = di-trans,octa-cis-undecaprenyl phosphate + phosphate + H(+). Functionally, catalyzes the dephosphorylation of undecaprenyl diphosphate (UPP). Confers resistance to bacitracin. This chain is Undecaprenyl-diphosphatase, found in Cellvibrio japonicus (strain Ueda107) (Pseudomonas fluorescens subsp. cellulosa).